We begin with the raw amino-acid sequence, 113 residues long: uncharacterized protein (113 aa).

Residues 28-55 (CDGGPRRPLSRRGEEARRARAPSYEEQE) form a disordered region.

This is an uncharacterized protein from Human cytomegalovirus (strain AD169) (HHV-5).